The primary structure comprises 413 residues: MSTVIATYLLHDEKDIRKKAEGIALGLTVGTWTDLPALEQEQLRKHKGEVVGIEELGESGPANEYFDKRLKRAIVKIAYPTVNFSADLPALLATTFGKLSLDGEVRLLDLELSDEWKRHFPGPRFGIAGIREKVGVYDRPLLMSIFKGIIGRDLAYLTSELKKQALGGVDLVKDDEILFDNELLPFEKRITAGKAALQEVYEQTGKRTLYAVNLTGKTFELKEKAKRAAELGADVLLFNVFTYGLDVLQGLREDENINVPIMAHPAFSGAMTPSEFYGVAPSLLLGKFLRLAGADFVLFPSPYGSVALEREQALGIARALTDEQEPFARAFPVPSAGIHPGLVPLLVRDFGLDCIVNAGGGIHGHPDGAIGGGQAFRAAIDAALAGRLLREAVKENEALQKAIDRWGAIEVEA.

Lys-98 functions as the Proton acceptor in the catalytic mechanism. Substrate-binding positions include Lys-147, 173 to 176 (KDDE), His-264, Gly-337, and 359 to 360 (GG). Residues Lys-173, Asp-175, and Glu-176 each contribute to the Mg(2+) site. N6-carboxylysine is present on Lys-173.

This sequence belongs to the RuBisCO large chain family. Type IV subfamily. In terms of assembly, homodimer. Mg(2+) serves as cofactor.

It catalyses the reaction 5-methylsulfanyl-2,3-dioxopentyl phosphate = 2-hydroxy-5-methylsulfanyl-3-oxopent-1-enyl phosphate. It participates in amino-acid biosynthesis; L-methionine biosynthesis via salvage pathway; L-methionine from S-methyl-5-thio-alpha-D-ribose 1-phosphate: step 3/6. In terms of biological role, catalyzes the enolization of 2,3-diketo-5-methylthiopentyl-1-phosphate (DK-MTP-1-P) into 2-hydroxy-3-keto-5-methylthiopentenyl-1-phosphate (HK-MTPenyl-1-P). The chain is 2,3-diketo-5-methylthiopentyl-1-phosphate enolase from Geobacillus thermodenitrificans (strain NG80-2).